The primary structure comprises 156 residues: Small ribosomal subunit protein uS7 (156 aa).

The protein belongs to the universal ribosomal protein uS7 family. As to quaternary structure, part of the 30S ribosomal subunit. Contacts proteins S9 and S11.

In terms of biological role, one of the primary rRNA binding proteins, it binds directly to 16S rRNA where it nucleates assembly of the head domain of the 30S subunit. Is located at the subunit interface close to the decoding center, probably blocks exit of the E-site tRNA. The chain is Small ribosomal subunit protein uS7 from Azorhizobium caulinodans (strain ATCC 43989 / DSM 5975 / JCM 20966 / LMG 6465 / NBRC 14845 / NCIMB 13405 / ORS 571).